We begin with the raw amino-acid sequence, 58 residues long: Photosystem II reaction center protein K (58 aa).

The propeptide occupies 1 to 21; the sequence is MLAIFNIYLDNAFHLNGIILA. A helical membrane pass occupies residues 29–49; the sequence is IFDPIVDVMPIIPVFFFLLAF.

It belongs to the PsbK family. In terms of assembly, PSII is composed of 1 copy each of membrane proteins PsbA, PsbB, PsbC, PsbD, PsbE, PsbF, PsbH, PsbI, PsbJ, PsbK, PsbL, PsbM, PsbT, PsbX, PsbY, PsbZ, Psb30/Ycf12, at least 3 peripheral proteins of the oxygen-evolving complex and a large number of cofactors. It forms dimeric complexes.

The protein resides in the plastid. It is found in the chloroplast thylakoid membrane. In terms of biological role, one of the components of the core complex of photosystem II (PSII). PSII is a light-driven water:plastoquinone oxidoreductase that uses light energy to abstract electrons from H(2)O, generating O(2) and a proton gradient subsequently used for ATP formation. It consists of a core antenna complex that captures photons, and an electron transfer chain that converts photonic excitation into a charge separation. This chain is Photosystem II reaction center protein K, found in Physcomitrium patens (Spreading-leaved earth moss).